A 133-amino-acid polypeptide reads, in one-letter code: Interferon-induced transmembrane protein 3 (133 aa).

Residues 1–57 are Cytoplasmic-facing; sequence MNHTVQTFFSPVNSGQPPNYEMLKEEHEVAVLGAPHNPAPPTSTVIHIRSETSVPDH. Tyr20 carries the phosphotyrosine modification. Lys24 is covalently cross-linked (Glycyl lysine isopeptide (Lys-Gly) (interchain with G-Cter in ubiquitin)). The helical intramembrane region spans 58–78; that stretch reads VVWSLFNTLFMNPCCLGFIAF. Residues 60 to 93 form an interaction with SPP1 region; the sequence is WSLFNTLFMNPCCLGFIAFAYSVKSRDRKMVGDV. S-palmitoyl cysteine attachment occurs at residues Cys71 and Cys72. Residues 79-107 lie on the Cytoplasmic side of the membrane; it reads AYSVKSRDRKMVGDVTGAQAYASTAKCLN. Glycyl lysine isopeptide (Lys-Gly) (interchain with G-Cter in ubiquitin) cross-links involve residues Lys83, Lys88, and Lys104. Cys105 carries S-palmitoyl cysteine lipidation. A helical transmembrane segment spans residues 108 to 128; sequence IWALILGILMTILLIVIPVLI. An interaction with VAPA region spans residues 108–133; it reads IWALILGILMTILLIVIPVLIFQAYG. The Extracellular segment spans residues 129-133; the sequence is FQAYG.

It belongs to the CD225/Dispanin family. Interacts with ATP6V0B. Interacts with CD81. Interacts with SPP1; the interaction reduces OPN expression. Interacts with VAPA. Interacts with BRI3 (isoforms 1 and 2); the interaction with isoform 2 is weaker than with isoform 1. Palmitoylation on membrane-proximal cysteines controls clustering in membrane compartments and antiviral activity against influenza virus and hepatitis C virus (HCV). Has no effect on anti-SARS-CoV-2 activity. Post-translationally, not glycosylated. In terms of processing, polyubiquitinated with both 'Lys-48' and 'Lys-63' linkages. Ubiquitination negatively regulates antiviral activity. Lys-24 is the most prevalent ubiquitination site. Phosphorylation at Tyr-20 is required for endosomal and lysosomal location.

It is found in the cell membrane. Its subcellular location is the late endosome membrane. It localises to the early endosome membrane. The protein localises to the lysosome membrane. The protein resides in the cytoplasm. It is found in the perinuclear region. In terms of biological role, IFN-induced antiviral protein which disrupts intracellular cholesterol homeostasis. Inhibits the entry of viruses to the host cell cytoplasm by preventing viral fusion with cholesterol depleted endosomes. May inactivate new enveloped viruses which buds out of the infected cell, by letting them go out with a cholesterol depleted membrane. Active against multiple viruses, including influenza A virus, SARS coronaviruses (SARS-CoV and SARS-CoV-2), Marburg virus (MARV), Ebola virus (EBOV), Dengue virus (DNV), West Nile virus (WNV), human immunodeficiency virus type 1 (HIV-1), hepatitis C virus (HCV) and vesicular stomatitis virus (VSV). Can inhibit: influenza virus hemagglutinin protein-mediated viral entry, MARV and EBOV GP1,2-mediated viral entry, SARS-CoV and SARS-CoV-2 S protein-mediated viral entry and VSV G protein-mediated viral entry. Plays a critical role in the structural stability and function of vacuolar ATPase (v-ATPase). Establishes physical contact with the v-ATPase of endosomes which is critical for proper clathrin localization and is also required for the function of the v-ATPase to lower the pH in phagocytic endosomes thus establishing an antiviral state. In hepatocytes, IFITM proteins act in a coordinated manner to restrict HCV infection by targeting the endocytosed HCV virion for lysosomal degradation. IFITM2 and IFITM3 display anti-HCV activity that may complement the anti-HCV activity of IFITM1 by inhibiting the late stages of HCV entry, possibly in a coordinated manner by trapping the virion in the endosomal pathway and targeting it for degradation at the lysosome. Exerts opposing activities on SARS-CoV-2, including amphipathicity-dependent restriction of virus at endosomes and amphipathicity-independent enhancement of infection at the plasma membrane. This is Interferon-induced transmembrane protein 3 from Homo sapiens (Human).